A 393-amino-acid chain; its full sequence is S-adenosylmethionine synthase (393 aa).

An ATP-binding site is contributed by His16. Asp18 is a binding site for Mg(2+). A K(+)-binding site is contributed by Glu44. L-methionine contacts are provided by Glu57 and Gln100. Residues 100–110 (QSNDIAQGVDQ) are flexible loop. Residues 167 to 169 (DAK), 238 to 239 (RF), Asp247, 253 to 254 (RK), Ala270, and Lys274 each bind ATP. Asp247 contacts L-methionine. Residue Lys278 participates in L-methionine binding.

It belongs to the AdoMet synthase family. In terms of assembly, homotetramer; dimer of dimers. Mg(2+) serves as cofactor. Requires K(+) as cofactor.

The protein localises to the cytoplasm. It carries out the reaction L-methionine + ATP + H2O = S-adenosyl-L-methionine + phosphate + diphosphate. Its pathway is amino-acid biosynthesis; S-adenosyl-L-methionine biosynthesis; S-adenosyl-L-methionine from L-methionine: step 1/1. Catalyzes the formation of S-adenosylmethionine (AdoMet) from methionine and ATP. The overall synthetic reaction is composed of two sequential steps, AdoMet formation and the subsequent tripolyphosphate hydrolysis which occurs prior to release of AdoMet from the enzyme. The sequence is that of S-adenosylmethionine synthase from Methylibium petroleiphilum (strain ATCC BAA-1232 / LMG 22953 / PM1).